Reading from the N-terminus, the 243-residue chain is Terpene cyclase ptmB (243 aa).

The next 3 helical transmembrane spans lie at 19-39 (IANLFVLGMGLGWLINYVGMI), 48-68 (YGMAIMPLCCNIAWEIVYSLI), and 78-98 (GVFIAGLTINIGVMYAAIKFA). N-linked (GlcNAc...) asparagine glycosylation occurs at Asn111. The next 4 membrane-spanning stretches (helical) occupy residues 112 to 132 (LSLIFFLATLGFLTGHLALAA), 137 to 157 (SLAYSWGAVVCQLLLSVGGLC), 172 to 194 (LWLSRFLGSSCTVGFASLRWMYW), and 205 to 225 (LVLWSLALFLTVDGSYGICYW).

Belongs to the paxB family.

The protein localises to the membrane. It functions in the pathway secondary metabolite biosynthesis. Terpene cyclase; part of the gene cluster that mediates the biosynthesis of the indole diterpenes penitrems. The geranylgeranyl diphosphate (GGPP) synthase ptmG catalyzes the first step in penitrem biosynthesis via conversion of farnesyl pyrophosphate and isopentyl pyrophosphate into geranylgeranyl pyrophosphate (GGPP). Condensation of indole-3-glycerol phosphate with GGPP by the prenyl transferase ptmC then forms 3-geranylgeranylindole (3-GGI). Epoxidation by the FAD-dependent monooxygenase ptmM leads to a epoxidized-GGI that is substrate of the terpene cyclase ptmB for cyclization to yield paspaline. Paspaline is subsequently converted to 13-desoxypaxilline by the cytochrome P450 monooxygenase ptmP, the latter being then converted to paxilline by the cytochrome P450 monooxygenase ptmQ. Paxilline is converted to beta-paxitriol via C-10 ketoreduction by the short-chain dehydrogenase ptmH which can be monoprenylated at the C-20 by the indole diterpene prenyltransferase ptmD. A two-step elimination (acetylation and elimination) process performed by the O-acetyltransferase ptmV and ptmI leads to the production of the prenylated form of penijanthine. The FAD-linked oxidoreductase ptmO then converts the prenylated form of penijanthine into PC-M5 which is in turn transformed into PC-M4 by the aromatic dimethylallyltransferase ptmE. Five sequential oxidative transformations performed by the cytochrome P450 monooxygenases ptmK, ptmU, ptmL, ptmN and ptmJ yield the various penitrem compounds. PtmK, ptmU and ptmM are involved in the formation of the key bicyclic ring of penitrem C via the formation of the intermediates secopenitrem D and penitrem D. PtmL catalyzes the epoxidation of penitrem D and C to yield penitrem B and F, respectively. PtmJ catalyzes the last benzylic hydroxylation to convert penitrem B to prenitrem E and penitrem F to penitrem A. The protein is Terpene cyclase ptmB of Penicillium ochrochloron.